We begin with the raw amino-acid sequence, 218 residues long: Cytochrome b6 (218 aa).

The helical transmembrane segment at 35 to 55 (IFYCLGGITLVCFLIQFATGF) threads the bilayer. C38 contributes to the heme c binding site. Positions 89 and 103 each coordinate heme b. 3 consecutive transmembrane segments (helical) span residues 93-113 (ASMMVLMLILHVFRVYLTGGF), 119-139 (LTWVTGVTMAVITVSFGVTGY), and 189-209 (LHTFVMPWLLAVFMLMHFLMI). Heme b contacts are provided by H190 and H205.

Belongs to the cytochrome b family. PetB subfamily. In terms of assembly, the 4 large subunits of the cytochrome b6-f complex are cytochrome b6, subunit IV (17 kDa polypeptide, PetD), cytochrome f and the Rieske protein, while the 4 small subunits are PetG, PetL, PetM and PetN. The complex functions as a dimer. Heme b is required as a cofactor. The cofactor is heme c.

Its subcellular location is the cellular thylakoid membrane. Its function is as follows. Component of the cytochrome b6-f complex, which mediates electron transfer between photosystem II (PSII) and photosystem I (PSI), cyclic electron flow around PSI, and state transitions. The polypeptide is Cytochrome b6 (Parasynechococcus marenigrum (strain WH8102)).